A 330-amino-acid polypeptide reads, in one-letter code: Probable allantoicase (330 aa).

The protein belongs to the allantoicase family.

It carries out the reaction allantoate + H2O = (S)-ureidoglycolate + urea. It functions in the pathway nitrogen metabolism; (S)-allantoin degradation; (S)-ureidoglycolate from allantoate (aminidohydrolase route): step 1/1. This Photobacterium profundum (strain SS9) protein is Probable allantoicase.